Reading from the N-terminus, the 421-residue chain is tRNA (guanine-N(7)-)-methyltransferase non-catalytic subunit TRM82 (421 aa).

3 WD repeats span residues 72 to 112 (AVYS…EDPE), 170 to 212 (GHVS…IVDK), and 216 to 258 (GHKE…SQYS).

It belongs to the WD repeat TRM82 family. As to quaternary structure, forms a heterodimer with the catalytic subunit TRM8.

Its subcellular location is the nucleus. The protein operates within tRNA modification; N(7)-methylguanine-tRNA biosynthesis. In terms of biological role, required for the formation of N(7)-methylguanine at position 46 (m7G46) in tRNA. In the complex, it is required to stabilize and induce conformational changes of the catalytic subunit. The polypeptide is tRNA (guanine-N(7)-)-methyltransferase non-catalytic subunit TRM82 (Candida glabrata (strain ATCC 2001 / BCRC 20586 / JCM 3761 / NBRC 0622 / NRRL Y-65 / CBS 138) (Yeast)).